The primary structure comprises 233 residues: Purine nucleoside phosphorylase DeoD-type (233 aa).

Histidine 4 contacts a purine D-ribonucleoside. Residues glycine 20, arginine 24, arginine 43, and 87-90 (RIGT) contribute to the phosphate site. Residues 179–181 (EME) and 203–204 (SD) contribute to the a purine D-ribonucleoside site. The active-site Proton donor is aspartate 204.

The protein belongs to the PNP/UDP phosphorylase family. Homohexamer; trimer of homodimers.

It carries out the reaction a purine D-ribonucleoside + phosphate = a purine nucleobase + alpha-D-ribose 1-phosphate. The catalysed reaction is a purine 2'-deoxy-D-ribonucleoside + phosphate = a purine nucleobase + 2-deoxy-alpha-D-ribose 1-phosphate. Its function is as follows. Catalyzes the reversible phosphorolytic breakdown of the N-glycosidic bond in the beta-(deoxy)ribonucleoside molecules, with the formation of the corresponding free purine bases and pentose-1-phosphate. This chain is Purine nucleoside phosphorylase DeoD-type, found in Thermoanaerobacter pseudethanolicus (strain ATCC 33223 / 39E) (Clostridium thermohydrosulfuricum).